The following is a 583-amino-acid chain: Sensor protein SrrB (583 aa).

At 1–11 the chain is on the cytoplasmic side; sequence MMSRLNSVVIK. Residues 12–32 traverse the membrane as a helical segment; the sequence is LWLTIILIVTTVLILLSIALI. Over 33–174 the chain is Extracellular; sequence TFMQYYFTQE…SIEDTNNAIT (142 aa). The chain crosses the membrane as a helical span at residues 175–195; it reads IITIITAVIFLTITTVFAFFL. Residues 196–583 are Cytoplasmic-facing; it reads SSRITKPLRR…TFIIKLPKPE (388 aa). The HAMP domain occupies 197 to 249; that stretch reads SRITKPLRRLRDQATRVSEGDYSYKPSVTTKDEIGQLSQAFNQMSTEIEEHVD. In terms of domain architecture, Histidine kinase spans 366-583; the sequence is NVSHELRTPI…TFIIKLPKPE (218 aa). At H369 the chain carries Phosphohistidine; by autocatalysis.

The protein localises to the cell membrane. It carries out the reaction ATP + protein L-histidine = ADP + protein N-phospho-L-histidine.. Its function is as follows. Member of the two-component regulatory system SrrA/SrrB, which is involved in the global regulation of staphylococcal virulence factors in response to environmental oxygen levels as well as biofilm formation. Also plays an essential role in host-derived nitric oxide resistance by regulating hmp/flavohemoglobin, an enzyme that detoxifies nitric oxide by converting it to nitrate. Functions as a sensor protein kinase which is autophosphorylated at a histidine residue and transfers its phosphate group to SrrA. In turn, SrrA binds to the upstream promoter regions of the target genes to positively and negatively regulate their expression. The sequence is that of Sensor protein SrrB (srrB) from Staphylococcus aureus (strain Mu50 / ATCC 700699).